An 874-amino-acid chain; its full sequence is MQPTNPNQFTEKAWEAIVRTTDVAKQAQHQQIESEHLFLALLQEPGLALNILKKAGLEAAQLQQFTERFIARQPKVSGGNQSVYLGRSLDQLLDQADQFRKDFGDEFISVEHLILSFPRDSRFGRLLSQEFKVDEKQLRQIIQQIRGSQKVTDQNPEGKYEALEKYGRDLTEMARRGKLDPVIGRDDEIRRTIQILSRRTKNNPVLIGEPGVGKTAIAEGLAQRIINGDVPQSLKDRRLIALDMGALIAGAKFRGEFEERLKAVLKEVTDSEGIIILFIDEIHTVVGAGAVQGSMDAGNLLKPMLARGELRCIGATTLDEYRQYIEKDAALERRFQQVFVDQPTVEDTISILRGLKERYEVHHGVRISDNALVAAAVLSTRYISDRFLPDKAIDLVDESAARLKMEITSKPEELDEIDRKILQLEMERLSLQKESDLASQERLQRLEKELADLKEEQRSLSSQWQAEKDVITDIQSVKEEIDQVNLLIQQAERDYDLNKAAELKYGKLTELQRKLNEMEGGLATTHTSGKSLLREEVTEVDIAEIISKWTGIPVSKLVESEMQKLLNLDEELHQRVIGQEEAVSAVADAIQRSRAGLSDPKRPIASFIFLGPTGVGKTELAKALAAYLFDTEDAMIRIDMSEYMEKHAVSRLIGAPPGYVGYDEGGQLTEAVRRRPYSVILFDEIEKAHPDVFNVMLQILDDGRVTDSRGRTVDFKNTILILTSNIGSQYILDVAGDDSRYEEMRSRVTEALRANFRPEFLNRVDETIIFHSLRKDQLQQIVRIQLHRLEERLSDRKLSLSMSPEAIDFLVEIGFDPVYGARPLKRVIQRELETAIAKAILRGQFSDGDTIQVAVENERLVFKAIATPTAVPLS.

The Clp R domain maps to 6–148 (PNQFTEKAWE…RQIIQQIRGS (143 aa)). 2 repeat regions span residues 9–73 (FTEK…IARQ) and 85–148 (LGRS…IRGS). The tract at residues 161–342 (EALEKYGRDL…RRFQQVFVDQ (182 aa)) is NBD1. 208-215 (GEPGVGKT) is a binding site for ATP. A linker region spans residues 343–551 (PTVEDTISIL…IAEIISKWTG (209 aa)). Residues 393–527 (IDLVDESAAR…MEGGLATTHT (135 aa)) adopt a coiled-coil conformation. Residues 561 to 772 (EMQKLLNLDE…RVDETIIFHS (212 aa)) are NBD2. 611–618 (GPTGVGKT) serves as a coordination point for ATP. Residues 773-874 (LRKDQLQQIV…IATPTAVPLS (102 aa)) form a C-terminal region.

The protein belongs to the ClpA/ClpB family. In terms of assembly, homohexamer. The oligomerization is ATP-dependent.

It localises to the cytoplasm. Its function is as follows. Part of a stress-induced multi-chaperone system, it is involved in the recovery of the cell from heat-induced damage, in cooperation with DnaK, DnaJ and GrpE. Acts before DnaK, in the processing of protein aggregates. Protein binding stimulates the ATPase activity; ATP hydrolysis unfolds the denatured protein aggregates, which probably helps expose new hydrophobic binding sites on the surface of ClpB-bound aggregates, contributing to the solubilization and refolding of denatured protein aggregates by DnaK. Necessary for thermotolerance. This chain is Chaperone protein ClpB 1 (clpB1), found in Synechococcus elongatus (strain ATCC 33912 / PCC 7942 / FACHB-805) (Anacystis nidulans R2).